The following is a 550-amino-acid chain: Glucose-6-phosphate isomerase (550 aa).

Residue Glu356 is the Proton donor of the active site. Active-site residues include His387 and Lys515.

The protein belongs to the GPI family.

Its subcellular location is the cytoplasm. It catalyses the reaction alpha-D-glucose 6-phosphate = beta-D-fructose 6-phosphate. Its pathway is carbohydrate biosynthesis; gluconeogenesis. It functions in the pathway carbohydrate degradation; glycolysis; D-glyceraldehyde 3-phosphate and glycerone phosphate from D-glucose: step 2/4. Functionally, catalyzes the reversible isomerization of glucose-6-phosphate to fructose-6-phosphate. This chain is Glucose-6-phosphate isomerase, found in Aliivibrio fischeri (strain MJ11) (Vibrio fischeri).